The chain runs to 135 residues: HTH-type transcriptional regulator CueR (135 aa).

The HTH merR-type domain maps to 1–69 (MNISDVAKIT…LEESGELVNL (69 aa)). Positions 4–23 (SDVAKITGLTSKAIRFYEEK) form a DNA-binding region, H-T-H motif. Residues cysteine 112 and cysteine 120 each contribute to the Cu(+) site.

In terms of assembly, homodimer.

Its subcellular location is the cytoplasm. Regulates the transcription of the copA and cueO genes. It detects cytoplasmic copper stress and activates transcription in response to increasing copper concentrations. The polypeptide is HTH-type transcriptional regulator CueR (cueR) (Escherichia coli O6:H1 (strain CFT073 / ATCC 700928 / UPEC)).